Reading from the N-terminus, the 347-residue chain is Transcription factor JunB (347 aa).

Glycyl lysine isopeptide (Lys-Gly) (interchain with G-Cter in SUMO2) cross-links involve residues lysine 4, lysine 33, and lysine 36. Residues 50–77 (LKAPGARGPGPEGNGGGSYFSSQGSDTG) are disordered. Positions 56–67 (RGPGPEGNGGGS) are enriched in gly residues. The span at 68–77 (YFSSQGSDTG) shows a compositional bias: polar residues. Lysine 81 is covalently cross-linked (Glycyl lysine isopeptide (Lys-Gly) (interchain with G-Cter in SUMO2)). A phosphothreonine mark is found at threonine 102 and threonine 104. A Phosphoserine modification is found at serine 117. A Glycyl lysine isopeptide (Lys-Gly) (interchain with G-Cter in SUMO2) cross-link involves residue lysine 141. Position 240 is an N6-acetyllysine; alternate (lysine 240). Residue lysine 240 forms a Glycyl lysine isopeptide (Lys-Gly) (interchain with G-Cter in SUMO1); alternate linkage. Lysine 240 participates in a covalent cross-link: Glycyl lysine isopeptide (Lys-Gly) (interchain with G-Cter in SUMO2); alternate. The span at 241–253 (EEPQTVPEARSRD) shows a compositional bias: basic and acidic residues. The disordered stretch occupies residues 241–260 (EEPQTVPEARSRDATPPVSP). Phosphoserine is present on serine 251. Threonine 255 bears the Phosphothreonine mark. Position 259 is a phosphoserine (serine 259). The tract at residues 268 to 295 (RIKVERKRLRNRLAATKCRKRKLERIAR) is basic motif. Residues 268–331 (RIKVERKRLR…AQLKQKVMTH (64 aa)) enclose the bZIP domain. The interval 296 to 324 (LEDKVKTLKAENAGLSSTAGLLREQVAQL) is leucine-zipper. Lysine 343 is covalently cross-linked (Glycyl lysine isopeptide (Lys-Gly) (interchain with G-Cter in SUMO2)).

This sequence belongs to the bZIP family. Jun subfamily. As to quaternary structure, binds DNA as a homodimer or as a heterodimer with another member of the Jun/Fos family. Component of an AP-1 transcription factor complex composed of JUN-FOS heterodimers. As part of the AP-1 transcription factor complex, forms heterodimers with FOSB, thereby binding to the AP-1 consensus sequence and stimulating transcription. Interacts with ITCH (via its WW domains). Post-translationally, ubiquitinated by ITCH, leading to its degradation.

It is found in the nucleus. Transcription factor involved in regulating gene activity following the primary growth factor response. Binds to the DNA sequence 5'-TGA[GC]TCA-3'. Heterodimerizes with proteins of the FOS family to form an AP-1 transcription complex, thereby enhancing its DNA binding activity to an AP-1 consensus sequence and its transcriptional activity. The sequence is that of Transcription factor JunB (JUNB) from Bos taurus (Bovine).